The following is a 64-amino-acid chain: Prokaryotic ubiquitin-like protein Pup (64 aa).

Residues 1-32 are disordered; it reads MNAKQTQIMGGGGRDEDNAEDSAQASGQVQIN. Residues 20–58 are ARC ATPase binding; it reads EDSAQASGQVQINTEGVDSLLDEIDGLLENNAEEFVRSY. Over residues 21-32 the composition is skewed to polar residues; that stretch reads DSAQASGQVQIN. An Isoglutamyl lysine isopeptide (Glu-Lys) (interchain with K-? in acceptor proteins) cross-link involves residue Glu-64.

Belongs to the prokaryotic ubiquitin-like protein family. Strongly interacts with the proteasome-associated ATPase ARC through a hydrophobic interface; the interacting region of Pup lies in its C-terminal half. There is one Pup binding site per ARC hexamer ring.

It functions in the pathway protein degradation; proteasomal Pup-dependent pathway. Functionally, protein modifier that is covalently attached to lysine residues of substrate proteins, thereby targeting them for proteasomal degradation. The tagging system is termed pupylation. This chain is Prokaryotic ubiquitin-like protein Pup, found in Corynebacterium glutamicum (strain R).